The primary structure comprises 853 residues: MSTIDNLDAHTPMMQQYLKLKAQHPDILLFYRMGDFYELFYDDAKRASQLLDISLTKRGASAGEPIPMAGIPHHAVENYLAKLVNQGESVAICEQIGDPATTKGPVERKVVRIVTPGTISDEALLQERQDNLLAAIWQDSKGFGYATLDISSGRFRLSEPADRETMAAELQRTNPAELLYAEDFAESSLIEGRRGLRRRPLWEFEIDTARQQLNLQFGTRDLVGFGVENAPRGLCAAGCLLQYVKDTQRTSLPHIRSITMERQQDSIIMDAATRRNLEITQNLAGGTDNTLASVLDCTVTPMGSRMLKRWLHMPVRDTAVLVERQQTIGALQERYTELQPVLRQVGDLERILARLALRTARPRDLARMRHALQQLPLLRELLADVDSQPVQKLREKMGEFTELRELLERAVIDAPPVLVRDGGVIAPGYSEELDEWRALADGATDYLDKLEIRERERLGLDTLKVGYNAVHGYYIQISRGQSHLAPIHYVRRQTLKNAERYIIPELKEYEDKVLTSKGKALALEKQLYDELFDLLLPHLADLQTSASALAELDVLVNLAERAETLNYCCPTFSDKPGIRISEGRHPVVEQVLKEPFIANPLQLAPQRRMLIITGPNMGGKSTYMRQTALIALLAYIGSYVPAQKVEIGPIDRIFTRVGAADDLASGRSTFMVEMTETANILHNATEHSLVLMDEIGRGTSTYDGLSLAWACAENLANKIKALTLFATHYFELTQLPEKMEGVANVHLDALEHGDTIAFMHSVQDGAASKSYGLAVAALAGVPKEVIKRARQKLRELESISPNAAATQVDGTQMSLLAAPEETSPAVEALENLDPDSLTPRQALEWIYRLKSLV.

Residue 614–621 (GPNMGGKS) participates in ATP binding.

Belongs to the DNA mismatch repair MutS family.

This protein is involved in the repair of mismatches in DNA. It is possible that it carries out the mismatch recognition step. This protein has a weak ATPase activity. The chain is DNA mismatch repair protein MutS from Klebsiella pneumoniae subsp. pneumoniae (strain ATCC 700721 / MGH 78578).